The following is a 73-amino-acid chain: Translation initiation factor IF-1 (73 aa).

Residues 1 to 73 form the S1-like domain; that stretch reads MAKKDGVIEI…TRGRIVYRYK (73 aa).

It belongs to the IF-1 family. In terms of assembly, component of the 30S ribosomal translation pre-initiation complex which assembles on the 30S ribosome in the order IF-2 and IF-3, IF-1 and N-formylmethionyl-tRNA(fMet); mRNA recruitment can occur at any time during PIC assembly.

It localises to the cytoplasm. In terms of biological role, one of the essential components for the initiation of protein synthesis. Stabilizes the binding of IF-2 and IF-3 on the 30S subunit to which N-formylmethionyl-tRNA(fMet) subsequently binds. Helps modulate mRNA selection, yielding the 30S pre-initiation complex (PIC). Upon addition of the 50S ribosomal subunit IF-1, IF-2 and IF-3 are released leaving the mature 70S translation initiation complex. In Arthrobacter sp. (strain FB24), this protein is Translation initiation factor IF-1.